Here is a 994-residue protein sequence, read N- to C-terminus: Translation initiation factor IF-2 (994 aa).

Polar residues-rich tracts occupy residues 1 to 10 (MSDENNNGRN) and 28 to 40 (SVSS…SFSH). A disordered region spans residues 1–405 (MSDENNNGRN…REKRKGGAQE (405 aa)). Low complexity predominate over residues 76–91 (PQKPAGPAQAPRAPQG). Residues 98–131 (AEERAARQRAIELARQQEADRRAREERARAEAEA) are compositionally biased toward basic and acidic residues. The span at 132-146 (ARAAQQKAAQAAAEP) shows a compositional bias: low complexity. Positions 147-157 (PAAPPPAPAAP) are enriched in pro residues. The segment covering 158–172 (PAAAAPAAPAAEAAP) has biased composition (low complexity). The segment covering 173–188 (APKPAPSPRPVPPSAP) has biased composition (pro residues). Positions 189 to 204 (APQAARPAAEAPPRQA) are enriched in low complexity. 2 stretches are compositionally biased toward basic and acidic residues: residues 216-235 (PDRR…RPSN) and 247-273 (PRRD…DRPQ). Residues 298 to 310 (RGPGGPRGPGGPR) show a composition bias toward gly residues. Basic and acidic residues-rich tracts occupy residues 336 to 350 (VDRR…RDPG) and 390 to 402 (RARE…RKGG). A tr-type G domain is found at 492–662 (PRPPVVAVMG…LLQAEVLDLK (171 aa)). The G1 stretch occupies residues 501–508 (GHVDHGKT). 501–508 (GHVDHGKT) lines the GTP pocket. The tract at residues 526–530 (GITQH) is G2. A G3 region spans residues 548–551 (DTPG). GTP contacts are provided by residues 548–552 (DTPGH) and 602–605 (NKID). Positions 602–605 (NKID) are G4. A G5 region spans residues 638–640 (SAT).

The protein belongs to the TRAFAC class translation factor GTPase superfamily. Classic translation factor GTPase family. IF-2 subfamily.

It is found in the cytoplasm. Its function is as follows. One of the essential components for the initiation of protein synthesis. Protects formylmethionyl-tRNA from spontaneous hydrolysis and promotes its binding to the 30S ribosomal subunits. Also involved in the hydrolysis of GTP during the formation of the 70S ribosomal complex. This Phenylobacterium zucineum (strain HLK1) protein is Translation initiation factor IF-2.